Reading from the N-terminus, the 91-residue chain is MLITKKDVEYTARKRIEKLYDFAIRTGDRRYIIEMEHIAQRMDITLPANIKRGYCKKCKTPYRNQVVRIKKNLVTVKCPVCDDIRRFQISR.

The Zn(2+) site is built by C55, C58, C78, and C81.

Belongs to the eukaryotic/archaeal RNase P protein component 4 family. As to quaternary structure, consists of a catalytic RNA component and at least 4-5 protein subunits. It depends on Zn(2+) as a cofactor.

It localises to the cytoplasm. It carries out the reaction Endonucleolytic cleavage of RNA, removing 5'-extranucleotides from tRNA precursor.. Its function is as follows. Part of ribonuclease P, a protein complex that generates mature tRNA molecules by cleaving their 5'-ends. The polypeptide is Ribonuclease P protein component 4 (Thermoplasma acidophilum (strain ATCC 25905 / DSM 1728 / JCM 9062 / NBRC 15155 / AMRC-C165)).